Here is a 211-residue protein sequence, read N- to C-terminus: Protein-methionine-sulfoxide reductase heme-binding subunit MsrQ (211 aa).

Helical transmembrane passes span 8–28 (VIWL…WLVW), 54–74 (FLLA…PLLI), 82–102 (LWCF…ELGV), 116–136 (PYLT…FTST), 153–173 (FVYL…KIIS), and 178–198 (IYAG…LSLF).

This sequence belongs to the MsrQ family. As to quaternary structure, heterodimer of a catalytic subunit (MsrP) and a heme-binding subunit (MsrQ). FMN serves as cofactor. It depends on heme b as a cofactor.

Its subcellular location is the cell inner membrane. Part of the MsrPQ system that repairs oxidized periplasmic proteins containing methionine sulfoxide residues (Met-O), using respiratory chain electrons. Thus protects these proteins from oxidative-stress damage caused by reactive species of oxygen and chlorine generated by the host defense mechanisms. MsrPQ is essential for the maintenance of envelope integrity under bleach stress, rescuing a wide series of structurally unrelated periplasmic proteins from methionine oxidation, including the primary periplasmic chaperone SurA and the lipoprotein Pal. MsrQ provides electrons for reduction to the reductase catalytic subunit MsrP, using the quinone pool of the respiratory chain. The protein is Protein-methionine-sulfoxide reductase heme-binding subunit MsrQ of Shigella flexneri.